We begin with the raw amino-acid sequence, 196 residues long: Carnitine operon protein CaiE (196 aa).

Residues 173–196 (TQPLRQMEENRPRLQGTTDVTPKR) form a disordered region. Residues 187 to 196 (QGTTDVTPKR) show a composition bias toward polar residues.

This sequence belongs to the transferase hexapeptide repeat family.

It participates in amine and polyamine metabolism; carnitine metabolism. In terms of biological role, overproduction of CaiE stimulates the activity of CaiB and CaiD. The sequence is that of Carnitine operon protein CaiE from Escherichia coli O7:K1 (strain IAI39 / ExPEC).